The primary structure comprises 677 residues: Envelope glycoprotein (677 aa).

The N-terminal stretch at 1 to 33 is a signal peptide; it reads MGSGYQLLQLPRERFRKTSFLVWVIILFQRAIS. Residues 34 to 651 are Extracellular-facing; it reads MPLGIVTNST…DLNLWTGWRQ (618 aa). An N-linked (GlcNAc...) asparagine; by host glycan is attached at asparagine 41. 5 cysteine pairs are disulfide-bonded: cysteine 54–cysteine 610, cysteine 109–cysteine 136, cysteine 122–cysteine 148, cysteine 512–cysteine 557, and cysteine 602–cysteine 609. Residues 55–202 form a receptor-binding region; sequence RDKLSSTSQL…HFWKATPAHE (148 aa). Asparagine 205, asparagine 239, asparagine 258, asparagine 269, asparagine 297, asparagine 317, asparagine 318, asparagine 339, asparagine 406, asparagine 420, asparagine 435, and asparagine 463 each carry an N-linked (GlcNAc...) asparagine; by host glycan. The mucin-like region stretch occupies residues 306–486; that stretch reads NLHFQILSTH…PSQPGFTINT (181 aa). The span at 315-326 shows a compositional bias: polar residues; that stretch reads HTNNSSDQSPAG. Disordered regions lie at residues 315–349, 370–482, and 489–508; these read HTNN…TDSP, NGET…QPGF, and KVAD…RQNT. 2 stretches are compositionally biased toward polar residues: residues 370–421 and 429–472; these read NGET…ASNE and NPIQ…TSPG. Residues 525–540 are fusion peptide; it reads GAAVGLAWIPYFGPAA. Residues 555–596 adopt a coiled-coil conformation; the sequence is LICGLRQLANETTQALQLFLRATTELRTYSLLNRKAIDFLLQ. A glycan (N-linked (GlcNAc...) asparagine; by host) is linked at asparagine 564. The stretch at 616 to 635 forms a coiled coil; it reads WTKNITDEINQIKHDFIDNP. Asparagine 619 carries N-linked (GlcNAc...) asparagine; by host glycosylation. A helical transmembrane segment spans residues 652–672; it reads WIPAGIGIIGVIIAIIALLCI. Residues cysteine 671 and cysteine 673 are each lipidated (S-palmitoyl cysteine; by host). Topologically, residues 673–677 are cytoplasmic; it reads CKILC.

Belongs to the filoviruses glycoprotein family. Homotrimer; each monomer consists of a GP1 and a GP2 subunit linked by disulfide bonds. The resulting peplomers (GP1,2) protrude from the virus surface as spikes. Interacts with host integrin alpha-V/ITGAV. Interacts with host CLEC10A. Binds also to host CD209 and CLEC4M/DC-SIGN(R). Interacts with host FOLR1. Interacts with BST2; this interaction inhibits the antiviral effect of BST2 and this allows viral release from infected cells. Interacts with host FCN1; this interaction enhances viral entry. Interacts with host TLR4; this interaction induces cell death in T-lymphocytes or proinflammatory cytokines and SOCS1 production in monocytes. As to quaternary structure, interacts with host entry receptor NPC1. In terms of assembly, GP1 and GP2delta are part of GP1,2delta soluble complexes released by ectodomain shedding. Post-translationally, the signal peptide region modulates GP's high mannose glycosylation, thereby determining the efficiency of the interactions with DC-SIGN(R). N-glycosylated. In terms of processing, O-glycosylated in the mucin-like region. Post-translationally, palmitoylation of GP2 is not required for its function. Specific enzymatic cleavages in vivo yield mature proteins. The precursor is processed into GP1 and GP2 by host cell furin in the trans Golgi, and maybe by other host proteases, to yield the mature GP1 and GP2 proteins. The cleavage site corresponds to the furin optimal cleavage sequence [KR]-X-[KR]-R. This cleavage does not seem to be required for function. After the internalization of the virus into cell endosomes, GP1 C-terminus is removed by the endosomal proteases cathepsin B, cathepsin L, or both, leaving a 19-kDa N-terminal fragment which is further digested by cathepsin B. Proteolytic processing of GP1,2 by host ADAM17 can remove the transmembrane anchor of GP2 and leads to shedding of complexes consisting in GP1 and truncated GP2 (GP1,2delta).

It localises to the virion membrane. The protein resides in the host cell membrane. Its subcellular location is the secreted. Trimeric GP1,2 complexes form the virion surface spikes and mediate the viral entry processes, with GP1 acting as the receptor-binding subunit and GP2 as the membrane fusion subunit. At later times of infection, down-regulates the expression of various host cell surface molecules that are essential for immune surveillance and cell adhesion. Down-modulates several integrins including ITGA1, ITGA2, ITGA3, ITGA4, ITGA5, ITGA6, ITGAV and ITGB1. This decrease in cell adhesion molecules may lead to cell detachment, contributing to the disruption of blood vessel integrity and hemorrhages developed during infection (cytotoxicity). Interacts with host TLR4 and thereby stimulates the differentiation and activation of monocytes leading to bystander death of T-lymphocytes. Down-regulates as well the function of host natural killer cells. Counteracts the antiviral effect of host BST2/tetherin that restricts release of progeny virions from infected cells. However, cooperates with VP40 and host BST2 to activate canonical NF-kappa-B pathway in a manner dependent on neddylation. In terms of biological role, functions as a decoy for anti-GP1,2 antibodies thereby contributing to viral immune evasion. Interacts and activates host macrophages and dendritic cells inducing up-regulation of cytokine transcription. This effect is mediated throught activation of host TLR4. Its function is as follows. Responsible for binding to the receptor(s) on target cells. Interacts with CD209/DC-SIGN and CLEC4M/DC-SIGNR which act as cofactors for virus entry into dendritic cells (DCs) and endothelial cells. Binding to the macrophage specific lectin CLEC10A also seems to enhance virus infectivity. Interaction with FOLR1/folate receptor alpha may be a cofactor for virus entry in some cell types, although results are contradictory. Members of the Tyro3 receptor tyrosine kinase family also seem to be cell entry factors in filovirus infection. Once attached, the virions are internalized through clathrin-dependent endocytosis and/or macropinocytosis. After internalization of the virus into the endosomes of the host cell, proteolysis of GP1 by two cysteine proteases, CTSB/cathepsin B and CTSL/cathepsin L removes the glycan cap and allows GP1 binding to the host entry receptor NPC1. NPC1-binding, Ca(2+) and acidic pH induce a conformational change of GP2, which unmasks its fusion peptide and permit membranes fusion. Functionally, acts as a class I viral fusion protein. Under the current model, the protein has at least 3 conformational states: pre-fusion native state, pre-hairpin intermediate state, and post-fusion hairpin state. During viral and target cell membrane fusion, the coiled coil regions (heptad repeats) assume a trimer-of-hairpins structure, positioning the fusion peptide in close proximity to the C-terminal region of the ectodomain. The formation of this structure appears to drive apposition and subsequent fusion of viral and target cell membranes. Responsible for penetration of the virus into the cell cytoplasm by mediating the fusion of the membrane of the endocytosed virus particle with the endosomal membrane. Low pH in endosomes induces an irreversible conformational change in GP2, releasing the fusion hydrophobic peptide. In Homo sapiens (Human), this protein is Envelope glycoprotein (GP).